A 154-amino-acid polypeptide reads, in one-letter code: Large ribosomal subunit protein bL17 (154 aa).

The segment at 127 to 154 is disordered; that stretch reads TAAKQDRAKRVKGSKKAETEKEGGESAE. Residues 141–154 are compositionally biased toward basic and acidic residues; sequence KKAETEKEGGESAE.

It belongs to the bacterial ribosomal protein bL17 family. As to quaternary structure, part of the 50S ribosomal subunit. Contacts protein L32.

This Chlorobaculum parvum (strain DSM 263 / NCIMB 8327) (Chlorobium vibrioforme subsp. thiosulfatophilum) protein is Large ribosomal subunit protein bL17.